The sequence spans 186 residues: Transcriptional repressor NrdR (186 aa).

A disordered region spans residues 1 to 24 (MRCPYCGGLDTQVKDSRPSDDASA). Residues 3–34 (CPYCGGLDTQVKDSRPSDDASAIRRRRICPDC) fold into a zinc finger. A compositionally biased stretch (basic and acidic residues) spans 12-24 (QVKDSRPSDDASA). The ATP-cone domain maps to 49-139 (LTVVKRSGRR…VYKNFREARD (91 aa)). The tract at residues 146–186 (RLNGAGRPGGEPEPPDEAAPGPAAAPGEGGEAPARRARSRA) is disordered.

The protein belongs to the NrdR family. Zn(2+) serves as cofactor.

Functionally, negatively regulates transcription of bacterial ribonucleotide reductase nrd genes and operons by binding to NrdR-boxes. In Methylobacterium sp. (strain 4-46), this protein is Transcriptional repressor NrdR.